We begin with the raw amino-acid sequence, 291 residues long: Transmembrane O-methyltransferase (291 aa).

A helical transmembrane segment spans residues 31 to 51 (VGTMSPAIALAFLPLVVTLLV). S-adenosyl-L-methionine is bound by residues Glu-137, 139–140 (GT), Ser-145, Glu-163, and Ser-193.

The protein belongs to the class I-like SAM-binding methyltransferase superfamily. Cation-dependent O-methyltransferase family. As to quaternary structure, interacts with LHFPL5, PCDH15, TMC1, TMC2 and TMIE. Interacts directly with TMC1. The interaction of TOMT with TMC1 and TMC2 is required for the transportation of TMC1/2 into the stereocilia of hair cells.

It is found in the membrane. The protein localises to the cytoplasm. It localises to the endoplasmic reticulum. It catalyses the reaction a catechol + S-adenosyl-L-methionine = a guaiacol + S-adenosyl-L-homocysteine + H(+). Its function is as follows. Catalyzes the O-methylation, and thereby the inactivation, of catecholamine neurotransmitters and catechol hormones. Required for auditory function. Component of the cochlear hair cell's mechanotransduction (MET) machinery. Involved in the assembly of the asymmetric tip-link MET complex. Required for transportation of TMC1 and TMC2 proteins into the mechanically sensitive stereocilia of the hair cells. The function in MET is independent of the enzymatic activity. This is Transmembrane O-methyltransferase from Pan troglodytes (Chimpanzee).